A 555-amino-acid chain; its full sequence is Formate--tetrahydrofolate ligase (555 aa).

64 to 71 (TKAGIGKT) contacts ATP.

This sequence belongs to the formate--tetrahydrofolate ligase family.

The catalysed reaction is (6S)-5,6,7,8-tetrahydrofolate + formate + ATP = (6R)-10-formyltetrahydrofolate + ADP + phosphate. The protein operates within one-carbon metabolism; tetrahydrofolate interconversion. The sequence is that of Formate--tetrahydrofolate ligase from Phocaeicola vulgatus (strain ATCC 8482 / DSM 1447 / JCM 5826 / CCUG 4940 / NBRC 14291 / NCTC 11154) (Bacteroides vulgatus).